Reading from the N-terminus, the 396-residue chain is Ribosomal RNA large subunit methyltransferase I (396 aa).

In terms of domain architecture, PUA spans 2 to 81 (SVRLVLTKGR…ETIDIAFFTR (80 aa)).

The protein belongs to the methyltransferase superfamily. RlmI family.

It localises to the cytoplasm. The enzyme catalyses cytidine(1962) in 23S rRNA + S-adenosyl-L-methionine = 5-methylcytidine(1962) in 23S rRNA + S-adenosyl-L-homocysteine + H(+). Its function is as follows. Specifically methylates the cytosine at position 1962 (m5C1962) of 23S rRNA. The protein is Ribosomal RNA large subunit methyltransferase I of Enterobacter sp. (strain 638).